Here is a 561-residue protein sequence, read N- to C-terminus: DNA mismatch repair protein MutL (561 aa).

It belongs to the DNA mismatch repair MutL/HexB family.

In terms of biological role, this protein is involved in the repair of mismatches in DNA. It is required for dam-dependent methyl-directed DNA mismatch repair. May act as a 'molecular matchmaker', a protein that promotes the formation of a stable complex between two or more DNA-binding proteins in an ATP-dependent manner without itself being part of a final effector complex. In Rippkaea orientalis (strain PCC 8801 / RF-1) (Cyanothece sp. (strain PCC 8801)), this protein is DNA mismatch repair protein MutL.